A 551-amino-acid chain; its full sequence is Solute carrier family 22 member 6 (551 aa).

Residues 1-23 (MAFNDLLKQVGGVGRFQRIQVTL) are Cytoplasmic-facing. The chain crosses the membrane as a helical span at residues 24–44 (VVLPLLLMASHNTLQNFTAAI). The Extracellular portion of the chain corresponds to 45-135 (PPHHCRPPAH…LVCSHRALRQ (91 aa)). N-linked (GlcNAc...) asparagine glycosylation is found at Asn-56, Asn-92, and Asn-113. Residues 136–156 (LGQSLYMAGVLIGAMVFGYLA) traverse the membrane as a helical segment. Residues 157-164 (DRLGRRKV) lie on the Cytoplasmic side of the membrane. Residues 165-187 (LILNYLQTAVSGTCAAFSPNFTV) form a helical membrane-spanning segment. Residues 188–195 (YCTFRLLS) lie on the Extracellular side of the membrane. The chain crosses the membrane as a helical span at residues 196–216 (GMSLAGIALNCMTLNVEWMPI). Over 217–224 (HTRAYVGT) the chain is Cytoplasmic. A helical membrane pass occupies residues 225-245 (LAGYVYSTGQFLLAGVAYAVP). Over 246-248 (HWR) the chain is Extracellular. A helical transmembrane segment spans residues 249 to 269 (YLQLLVSVPFFAFFVYSWFFI). At 270–337 (ESARWYSTPG…ELLRCPALRH (68 aa)) the chain is on the cytoplasmic side. A helical membrane pass occupies residues 338 to 358 (LFLCLSLLWFATSFAYYGLVM). The Extracellular portion of the chain corresponds to 359–368 (DLQGFGVSIY). Residues 369-389 (LIQVIFGAVDLPAKLVCFLVI) form a helical membrane-spanning segment. Topologically, residues 390–395 (NSLGRR) are cytoplasmic. A helical membrane pass occupies residues 396-416 (PAQMASLLLAGICILVNGVIP). At 417–425 (RDQSIVRTS) the chain is on the extracellular side. A helical transmembrane segment spans residues 426–446 (LAVLGKGCLASSFNCIFLYTG). Over 447-484 (ELYPTMIRQTGLGMGSTMARVGSIVSPLVSMTSELYPS) the chain is Cytoplasmic. A helical transmembrane segment spans residues 485–505 (LPLFIYGAVPVAASAATALLP). The Extracellular portion of the chain corresponds to 506 to 551 (ETLGQPLPDTVQDLESRRRGKPRRQQQEQQKQMVPLQASVQEKNGL). A disordered region spans residues 520 to 551 (ESRRRGKPRRQQQEQQKQMVPLQASVQEKNGL).

It belongs to the major facilitator (TC 2.A.1) superfamily. Organic cation transporter (TC 2.A.1.19) family. Glycosylated. Glycosylation is necessary for proper targeting of the transporter to the plasma membrane.

It is found in the basolateral cell membrane. The protein localises to the basal cell membrane. It catalyses the reaction (6R)-L-erythro-5,6,7,8-tetrahydrobiopterin(out) + a dicarboxylate(in) = (6R)-L-erythro-5,6,7,8-tetrahydrobiopterin(in) + a dicarboxylate(out). The catalysed reaction is L-erythro-7,8-dihydrobiopterin(out) + a dicarboxylate(in) = L-erythro-7,8-dihydrobiopterin(in) + a dicarboxylate(out). The enzyme catalyses L-sepiapterin(out) + a dicarboxylate(in) = L-sepiapterin(in) + a dicarboxylate(out). It carries out the reaction prostaglandin F2alpha(out) + a dicarboxylate(in) = prostaglandin F2alpha(in) + a dicarboxylate(out). It catalyses the reaction prostaglandin E2(out) + a dicarboxylate(in) = prostaglandin E2(in) + a dicarboxylate(out). The catalysed reaction is 3',5'-cyclic AMP(out) + a dicarboxylate(in) = 3',5'-cyclic AMP(in) + a dicarboxylate(out). The enzyme catalyses 3',5'-cyclic GMP(out) + a dicarboxylate(in) = 3',5'-cyclic GMP(in) + a dicarboxylate(out). It carries out the reaction urate(out) + a dicarboxylate(in) = urate(in) + a dicarboxylate(out). It catalyses the reaction kynurenate(out) + glutarate(in) = kynurenate(in) + glutarate(out). The catalysed reaction is (indol-3-yl)acetate(out) + a dicarboxylate(in) = (indol-3-yl)acetate(in) + a dicarboxylate(out). The enzyme catalyses indoxyl sulfate(out) + a dicarboxylate(in) = indoxyl sulfate(in) + a dicarboxylate(out). It carries out the reaction N-benzoylglycine(out) + a dicarboxylate(in) = N-benzoylglycine(in) + a dicarboxylate(out). It catalyses the reaction 3-carboxy-4-methyl-5-propyl-2-furanpropanoate(out) + a dicarboxylate(in) = 3-carboxy-4-methyl-5-propyl-2-furanpropanoate(in) + a dicarboxylate(out). Secondary active transporter that functions as a Na(+)-independent organic anion (OA)/dicarboxylate antiporter where the uptake of one molecule of OA into the cell is coupled with an efflux of one molecule of intracellular dicarboxylate such as 2-oxoglutarate or glutarate. Mediates the uptake of OA across the basolateral side of proximal tubule epithelial cells, thereby contributing to the renal elimination of endogenous OA from the systemic circulation into the urine. Functions as a biopterin transporters involved in the uptake and the secretion of coenzymes tetrahydrobiopterin (BH4), dihydrobiopterin (BH2) and sepiapterin to urine, thereby determining baseline levels of blood biopterins. Transports prostaglandin E2 (PGE2) and prostaglandin F2-alpha (PGF2-alpha) and may contribute to their renal excretion. Also mediates the uptake of cyclic nucleotides such as cAMP and cGMP. Involved in the transport of neuroactive tryptophan metabolites kynurenate (KYNA) and xanthurenate (XA) and may contribute to their secretion from the brain. May transport glutamate. Also involved in the disposition of uremic toxins and potentially toxic xenobiotics by the renal organic anion secretory pathway, helping reduce their undesired toxicological effects on the body. Uremic toxins include the indoxyl sulfate (IS), hippurate/N-benzoylglycine (HA), indole acetate (IA), 3-carboxy-4- methyl-5-propyl-2-furanpropionate (CMPF) and urate. Xenobiotics include the mycotoxin ochratoxin (OTA). May also contribute to the transport of organic compounds in testes across the blood-testis-barrier. May also work as a bidirectional OA/dicarboxylate exchanger. This Oryctolagus cuniculus (Rabbit) protein is Solute carrier family 22 member 6.